A 33-amino-acid chain; its full sequence is uncharacterized protein (33 aa).

A helical transmembrane segment spans residues 11–31 (LALVIYMSVVLLLMVGVPLLF).

It localises to the membrane. This is an uncharacterized protein from Saccharomyces cerevisiae (strain ATCC 204508 / S288c) (Baker's yeast).